Here is a 203-residue protein sequence, read N- to C-terminus: High frequency lysogenization protein HflD homolog (203 aa).

This sequence belongs to the HflD family.

The protein localises to the cytoplasm. Its subcellular location is the cell inner membrane. The chain is High frequency lysogenization protein HflD homolog from Histophilus somni (strain 2336) (Haemophilus somnus).